The sequence spans 369 residues: Beta-1,4-galactosyltransferase 2 (369 aa).

Topologically, residues 1 to 15 are cytoplasmic; the sequence is MSRLLGGTLERVCKA. The chain crosses the membrane as a helical; Signal-anchor for type II membrane protein span at residues 16 to 36; it reads VLLLCLLHFLVAVILYFDVYA. The Lumenal segment spans residues 37–369; that stretch reads QHLAFFSRFS…GQPMSWLTQG (333 aa). A compositionally biased stretch (polar residues) spans 58–73; that stretch reads ASSSTNCSRPNATAAS. Residues 58 to 90 are disordered; that stretch reads ASSSTNCSRPNATAASSGLPEVPSARPGPTAPV. N-linked (GlcNAc...) asparagine glycosylation is found at asparagine 63 and asparagine 68. Residues cysteine 94 and cysteine 136 are joined by a disulfide bond. UDP-alpha-D-galactose-binding positions include 147 to 151, 186 to 188, 214 to 215, and tryptophan 275; these read PFRHR, FNR, and VD. The cysteines at positions 208 and 227 are disulfide-linked. Mn(2+) is bound at residue aspartate 215. N-acetyl-D-glucosamine is bound at residue 277-280; the sequence is GEDD. Histidine 308 contributes to the Mn(2+) binding site. 308–310 contributes to the UDP-alpha-D-galactose binding site; the sequence is HDR. Arginine 320 lines the N-acetyl-D-glucosamine pocket. N-linked (GlcNAc...) asparagine glycosylation is present at asparagine 354.

Belongs to the glycosyltransferase 7 family. Mn(2+) is required as a cofactor.

It is found in the golgi apparatus. The protein resides in the golgi stack membrane. It carries out the reaction D-glucose + UDP-alpha-D-galactose = lactose + UDP + H(+). The catalysed reaction is an N-acetyl-beta-D-glucosaminyl derivative + UDP-alpha-D-galactose = a beta-D-galactosyl-(1-&gt;4)-N-acetyl-beta-D-glucosaminyl derivative + UDP + H(+). The enzyme catalyses N-acetyl-D-glucosamine + UDP-alpha-D-galactose = beta-D-galactosyl-(1-&gt;4)-N-acetyl-D-glucosamine + UDP + H(+). It functions in the pathway protein modification; protein glycosylation. Functionally, responsible for the synthesis of complex-type N-linked oligosaccharides in many glycoproteins as well as the carbohydrate moieties of glycolipids. Can produce lactose. The protein is Beta-1,4-galactosyltransferase 2 of Mus musculus (Mouse).